A 245-amino-acid polypeptide reads, in one-letter code: Biosynthetic peptidoglycan transglycosylase (245 aa).

Residues 20–42 traverse the membrane as a helical segment; sequence VYAGSVFAGAWLATQLFYLAQIA.

It belongs to the glycosyltransferase 51 family.

The protein resides in the cell inner membrane. The enzyme catalyses [GlcNAc-(1-&gt;4)-Mur2Ac(oyl-L-Ala-gamma-D-Glu-L-Lys-D-Ala-D-Ala)](n)-di-trans,octa-cis-undecaprenyl diphosphate + beta-D-GlcNAc-(1-&gt;4)-Mur2Ac(oyl-L-Ala-gamma-D-Glu-L-Lys-D-Ala-D-Ala)-di-trans,octa-cis-undecaprenyl diphosphate = [GlcNAc-(1-&gt;4)-Mur2Ac(oyl-L-Ala-gamma-D-Glu-L-Lys-D-Ala-D-Ala)](n+1)-di-trans,octa-cis-undecaprenyl diphosphate + di-trans,octa-cis-undecaprenyl diphosphate + H(+). It functions in the pathway cell wall biogenesis; peptidoglycan biosynthesis. In terms of biological role, peptidoglycan polymerase that catalyzes glycan chain elongation from lipid-linked precursors. This is Biosynthetic peptidoglycan transglycosylase from Burkholderia cenocepacia (strain HI2424).